Reading from the N-terminus, the 567-residue chain is Zinc finger protein 512 (567 aa).

Residues 1 to 32 (MSSRLGAVPATSGPTTFKQQRSTRIVGAKNSR) form a disordered region. Over residues 12 to 23 (SGPTTFKQQRST) the composition is skewed to polar residues. Residues Lys-18 and Lys-84 each participate in a glycyl lysine isopeptide (Lys-Gly) (interchain with G-Cter in SUMO2) cross-link. A disordered region spans residues 86 to 148 (AATSHVEGSG…QARRIRKEPP (63 aa)). Over residues 119–130 (KKHKLYGRKQRP) the composition is skewed to basic residues. The C2H2-type 1 zinc-finger motif lies at 197–220 (FTCHHCGKQLRSLAGMKYHVMANH). Lys-227 participates in a covalent cross-link: Glycyl lysine isopeptide (Lys-Gly) (interchain with G-Cter in SUMO2). Residues 287-310 (LKCHHCGKPYRSKAGLAYHLRSEH) form a C2H2-type 2 zinc finger. A Glycyl lysine isopeptide (Lys-Gly) (interchain with G-Cter in SUMO2) cross-link involves residue Lys-333. A C2H2-type 3; atypical zinc finger spans residues 406–430 (IQCPNQGCEAVYSSVSGLKAHLGSC). The C2H2-type 4 zinc-finger motif lies at 440–463 (YKCLLCQKEFVSESGVKYHINSVH). The disordered stretch occupies residues 486–567 (QRQQEEEKRR…PKTNHKRGRK (82 aa)). Residues 495 to 508 (RQQHRSRRSLRRRQ) show a composition bias toward basic residues. A compositionally biased stretch (basic and acidic residues) spans 523-532 (VGKDQRRNNE). Over residues 556-567 (KPPKTNHKRGRK) the composition is skewed to basic residues.

It belongs to the krueppel C2H2-type zinc-finger protein family.

The protein localises to the nucleus. Its function is as follows. May be involved in transcriptional regulation. The protein is Zinc finger protein 512 (ZNF512) of Homo sapiens (Human).